A 190-amino-acid polypeptide reads, in one-letter code: Somatotropin (190 aa).

H19 serves as a coordination point for Zn(2+). Residues C52 and C163 are joined by a disulfide bond. Residue S105 is modified to Phosphoserine. E172 lines the Zn(2+) pocket. Cysteines 180 and 188 form a disulfide.

The protein belongs to the somatotropin/prolactin family.

The protein resides in the secreted. In terms of biological role, plays an important role in growth control. Its major role in stimulating body growth is to stimulate the liver and other tissues to secrete IGF1. It stimulates both the differentiation and proliferation of myoblasts. It also stimulates amino acid uptake and protein synthesis in muscle and other tissues. The sequence is that of Somatotropin (GH1) from Balaenoptera borealis (Sei whale).